A 249-amino-acid chain; its full sequence is uncharacterized protein (249 aa).

It belongs to the ycf73 family.

The protein resides in the plastid. The protein localises to the chloroplast. This is an uncharacterized protein from Oryza sativa (Rice).